The following is a 213-amino-acid chain: High frequency lysogenization protein HflD homolog (213 aa).

The stretch at 79 to 126 (QGLNAELTRYTLSLMVLERKLSSAKGALDTLGNRINGLQRQLEHFDLQ) forms a coiled coil.

This sequence belongs to the HflD family.

The protein localises to the cytoplasm. It localises to the cell inner membrane. The protein is High frequency lysogenization protein HflD homolog of Shigella dysenteriae serotype 1 (strain Sd197).